Consider the following 479-residue polypeptide: Cyclin-dependent kinase F-1 (479 aa).

In terms of domain architecture, Protein kinase spans 21 to 418 (YEIFERVGSG…TMEMLNDKYL (398 aa)). Residues 27–35 (VGSGAYADV) and Lys50 each bind ATP. Tyr32 carries the phosphotyrosine modification. The active-site Proton acceptor is Asp146. Ser179, Ser208, and Ser247 each carry phosphoserine. Positions 187 to 221 (KLEDKDGETSEPPEVIPDYENSPRQGSDGQEREAM) are disordered. Thr290 carries the post-translational modification Phosphothreonine. The tract at residues 434-479 (PTMSGPDEDSPRKWNDYREMDSDSDFDGFGPMNVKPTSSGFTIEFP) is disordered. Residues 442–454 (DSPRKWNDYREMD) are compositionally biased toward basic and acidic residues. Positions 468 to 479 (KPTSSGFTIEFP) are enriched in polar residues.

The protein belongs to the protein kinase superfamily. CMGC Ser/Thr protein kinase family. CDC2/CDKX subfamily. As to expression, highly expressed in suspension cell culture. Expressed at low levels in all plant organs.

The enzyme catalyses L-seryl-[protein] + ATP = O-phospho-L-seryl-[protein] + ADP + H(+). The catalysed reaction is L-threonyl-[protein] + ATP = O-phospho-L-threonyl-[protein] + ADP + H(+). It catalyses the reaction [DNA-directed RNA polymerase] + ATP = phospho-[DNA-directed RNA polymerase] + ADP + H(+). CDK-activating kinase that modulates CDKD-2 and CDKD-3 activities by phosphorylation of the T-loop. Activates CDKD-2 C-terminal domain (CTD) kinase activity. Activates CDKA-1 probably by phosphorylation. Possesses a CDK kinase activity independently of association with cyclin CYCH1-1. Phosphorylates the CTD of the large subunit of RNA polymerase II. In Arabidopsis thaliana (Mouse-ear cress), this protein is Cyclin-dependent kinase F-1 (CDKF-1).